Reading from the N-terminus, the 80-residue chain is RNA-binding protein Hfq (80 aa).

Positions E7–L67 constitute a Sm domain.

It belongs to the Hfq family. As to quaternary structure, homohexamer.

RNA chaperone that binds small regulatory RNA (sRNAs) and mRNAs to facilitate mRNA translational regulation in response to envelope stress, environmental stress and changes in metabolite concentrations. Also binds with high specificity to tRNAs. This is RNA-binding protein Hfq from Aquifex aeolicus (strain VF5).